Here is a 313-residue protein sequence, read N- to C-terminus: Dimethyladenosine transferase (313 aa).

A disordered region spans residues 1-22 (MPKIKSAASGRRRERQQQRGQL). S-adenosyl-L-methionine is bound by residues histidine 37, leucine 39, glycine 64, glutamate 85, aspartate 113, and asparagine 128.

The protein belongs to the class I-like SAM-binding methyltransferase superfamily. rRNA adenine N(6)-methyltransferase family. As to quaternary structure, part of the small subunit (SSU) processome, composed of more than 70 proteins and the RNA chaperone small nucleolar RNA (snoRNA) U3.

It is found in the nucleus. Its subcellular location is the nucleoplasm. It localises to the nucleolus. It catalyses the reaction adenosine(1779)/adenosine(1780) in 18S rRNA + 4 S-adenosyl-L-methionine = N(6)-dimethyladenosine(1779)/N(6)-dimethyladenosine(1780) in 18S rRNA + 4 S-adenosyl-L-homocysteine + 4 H(+). In terms of biological role, specifically dimethylates two adjacent adenosines in the loop of a conserved hairpin near the 3'-end of 18S rRNA in the 40S particle. Involved in the pre-rRNA processing steps leading to small-subunit rRNA production independently of its RNA-modifying catalytic activity. Part of the small subunit (SSU) processome, first precursor of the small eukaryotic ribosomal subunit. During the assembly of the SSU processome in the nucleolus, many ribosome biogenesis factors, an RNA chaperone and ribosomal proteins associate with the nascent pre-rRNA and work in concert to generate RNA folding, modifications, rearrangements and cleavage as well as targeted degradation of pre-ribosomal RNA by the RNA exosome. The sequence is that of Dimethyladenosine transferase (DIMT1) from Bos taurus (Bovine).